Reading from the N-terminus, the 433-residue chain is Adenylosuccinate synthetase (433 aa).

Residues 12–18 and 40–42 each bind GTP; these read GDEGKGK and GHT. Residue aspartate 13 is the Proton acceptor of the active site. Positions 13 and 40 each coordinate Mg(2+). Residues 13-16, 38-41, threonine 130, arginine 144, glutamine 225, threonine 240, and arginine 304 contribute to the IMP site; these read DEGK and NAGH. Histidine 41 serves as the catalytic Proton donor. Residue 300–306 coordinates substrate; the sequence is ATTGRPR. Residues arginine 306, 332-334, and 414-416 contribute to the GTP site; these read KLD and SIG.

This sequence belongs to the adenylosuccinate synthetase family. In terms of assembly, homodimer. Requires Mg(2+) as cofactor.

It localises to the cytoplasm. It catalyses the reaction IMP + L-aspartate + GTP = N(6)-(1,2-dicarboxyethyl)-AMP + GDP + phosphate + 2 H(+). It participates in purine metabolism; AMP biosynthesis via de novo pathway; AMP from IMP: step 1/2. Its function is as follows. Plays an important role in the de novo pathway of purine nucleotide biosynthesis. Catalyzes the first committed step in the biosynthesis of AMP from IMP. The chain is Adenylosuccinate synthetase from Geobacter sulfurreducens (strain ATCC 51573 / DSM 12127 / PCA).